We begin with the raw amino-acid sequence, 300 residues long: Actin-related protein 2/3 complex subunit 2-A (300 aa).

This sequence belongs to the ARPC2 family. In terms of assembly, component of the Arp2/3 complex composed of actr2/arp2, actr3/arp3, arpc1 (arpc1a or arpc1b), arpc2, arpc3, arpc4 and arpc5.

Its subcellular location is the cytoplasm. The protein localises to the cytoskeleton. The protein resides in the cell projection. It localises to the nucleus. Functionally, actin-binding component of the Arp2/3 complex, a multiprotein complex that mediates actin polymerization upon stimulation by nucleation-promoting factor (NPF). The Arp2/3 complex mediates the formation of branched actin networks in the cytoplasm, providing the force for cell motility. In addition to its role in the cytoplasmic cytoskeleton, the Arp2/3 complex also promotes actin polymerization in the nucleus, thereby regulating gene transcription and repair of damaged DNA. The Arp2/3 complex promotes homologous recombination (HR) repair in response to DNA damage by promoting nuclear actin polymerization, leading to drive motility of double-strand breaks (DSBs). This Xenopus laevis (African clawed frog) protein is Actin-related protein 2/3 complex subunit 2-A (arpc2-a).